The chain runs to 364 residues: Fructose-bisphosphate aldolase B (364 aa).

Residue A2 is modified to N-acetylalanine. Residue K13 is modified to N6-succinyllysine. S36 is modified (phosphoserine). T39 is subject to Phosphothreonine. R43 is a beta-D-fructose 1,6-bisphosphate binding site. The residue at position 89 (S89) is a Phosphoserine. T119 bears the Phosphothreonine mark. K121 is subject to N6-succinyllysine. S132 is subject to Phosphoserine. The Proton acceptor role is filled by E188. The active-site Schiff-base intermediate with dihydroxyacetone-P is K230. S272, S276, S299, and S301 each carry phosphoserine. A beta-D-fructose 1,6-bisphosphate-binding site is contributed by 272-274 (SGG). R304 lines the beta-D-fructose 1,6-bisphosphate pocket. Phosphoserine is present on S309. N6-succinyllysine is present on K317.

This sequence belongs to the class I fructose-bisphosphate aldolase family. Homotetramer. Interacts with BBS1, BBS2, BBS4 and BBS7. Forms a ternary complex with G6PD and TP53; this interaction is direct.

It is found in the cytoplasm. The protein localises to the cytosol. Its subcellular location is the cytoskeleton. The protein resides in the microtubule organizing center. It localises to the centrosome. It is found in the centriolar satellite. It catalyses the reaction beta-D-fructose 1,6-bisphosphate = D-glyceraldehyde 3-phosphate + dihydroxyacetone phosphate. It carries out the reaction beta-D-fructose 1-phosphate = D-glyceraldehyde + dihydroxyacetone phosphate. It functions in the pathway carbohydrate degradation; glycolysis; D-glyceraldehyde 3-phosphate and glycerone phosphate from D-glucose: step 4/4. Its pathway is carbohydrate biosynthesis; gluconeogenesis. It participates in carbohydrate metabolism; fructose metabolism. In terms of biological role, catalyzes the aldol cleavage of fructose 1,6-biphosphate to form two triosephosphates dihydroxyacetone phosphate and D-glyceraldehyde 3-phosphate in glycolysis as well as the reverse stereospecific aldol addition reaction in gluconeogenesis. In fructolysis, metabolizes fructose 1-phosphate derived from the phosphorylation of dietary fructose by fructokinase into dihydroxyacetone phosphate and D-glyceraldehyde. Acts as an adapter independently of its enzymatic activity, exerts a tumor suppressor role by stabilizing the ternary complex with G6PD and TP53 to inhibit G6PD activity and keep oxidative pentose phosphate metabolism in check. The sequence is that of Fructose-bisphosphate aldolase B from Homo sapiens (Human).